The sequence spans 415 residues: 3-isopropylmalate dehydratase large subunit (415 aa).

[4Fe-4S] cluster is bound by residues cysteine 295, cysteine 353, and cysteine 356.

Belongs to the aconitase/IPM isomerase family. LeuC type 2 subfamily. In terms of assembly, heterodimer of LeuC and LeuD. Requires [4Fe-4S] cluster as cofactor.

It catalyses the reaction (2R,3S)-3-isopropylmalate = (2S)-2-isopropylmalate. It participates in amino-acid biosynthesis; L-leucine biosynthesis; L-leucine from 3-methyl-2-oxobutanoate: step 2/4. Its function is as follows. Catalyzes the isomerization between 2-isopropylmalate and 3-isopropylmalate, via the formation of 2-isopropylmaleate. This chain is 3-isopropylmalate dehydratase large subunit, found in Pyrobaculum arsenaticum (strain DSM 13514 / JCM 11321 / PZ6).